The primary structure comprises 100 residues: Small ribosomal subunit protein uS14 (100 aa).

This sequence belongs to the universal ribosomal protein uS14 family. As to quaternary structure, part of the 30S ribosomal subunit. Contacts proteins S3 and S10.

Its function is as follows. Binds 16S rRNA, required for the assembly of 30S particles and may also be responsible for determining the conformation of the 16S rRNA at the A site. The protein is Small ribosomal subunit protein uS14 of Prochlorococcus marinus (strain NATL1A).